The primary structure comprises 180 residues: ATP synthase subunit delta (180 aa).

This sequence belongs to the ATPase delta chain family. F-type ATPases have 2 components, F(1) - the catalytic core - and F(0) - the membrane proton channel. F(1) has five subunits: alpha(3), beta(3), gamma(1), delta(1), epsilon(1). F(0) has three main subunits: a(1), b(2) and c(10-14). The alpha and beta chains form an alternating ring which encloses part of the gamma chain. F(1) is attached to F(0) by a central stalk formed by the gamma and epsilon chains, while a peripheral stalk is formed by the delta and b chains.

It localises to the cell membrane. In terms of biological role, f(1)F(0) ATP synthase produces ATP from ADP in the presence of a proton or sodium gradient. F-type ATPases consist of two structural domains, F(1) containing the extramembraneous catalytic core and F(0) containing the membrane proton channel, linked together by a central stalk and a peripheral stalk. During catalysis, ATP synthesis in the catalytic domain of F(1) is coupled via a rotary mechanism of the central stalk subunits to proton translocation. Its function is as follows. This protein is part of the stalk that links CF(0) to CF(1). It either transmits conformational changes from CF(0) to CF(1) or is implicated in proton conduction. This Pediococcus pentosaceus (strain ATCC 25745 / CCUG 21536 / LMG 10740 / 183-1w) protein is ATP synthase subunit delta.